The following is a 443-amino-acid chain: Two-pore potassium channel 2 (443 aa).

Topologically, residues 1 to 144 (MANDGNGDNN…KTDQQSDSKT (144 aa)) are cytoplasmic. The disordered stretch occupies residues 67–109 (SLPIDALSQNPSTSSSATTSFSDSTDLLLPLTEPNKPVRKSKP). Positions 72-98 (ALSQNPSTSSSATTSFSDSTDLLLPLT) are enriched in low complexity. A helical transmembrane segment spans residues 145-165 (IVNQAVALLVVYLSLGVLIYW). Residues 181 to 200 (DALYFCIVTMCTIGYGDITP) constitute an intramembrane region (pore-forming). The helical transmembrane segment at 208 to 228 (FSIFFVLVGFGFMDILLSGMV) threads the bilayer. The Cytoplasmic portion of the chain corresponds to 229–274 (TYVLDLQENYMLETARNESLNLNDRDKVRSYIIDVKKGRMRIRLKV). A helical transmembrane segment spans residues 275–295 (GLALGVVVLCLGFGVLIMHFV). An intramembrane region (pore-forming) is located at residues 302–321 (DSFYFSVMSVTTVGYGDRAF). A helical membrane pass occupies residues 328–348 (LLAAMWLLVSTLAVARAILFL). Residues 349–443 (AESRVDKRNR…TKDLPTATSI (95 aa)) lie on the Cytoplasmic side of the membrane. 2 EF-hand domains span residues 365–400 (LGESMSISQFLDADIDCNGCVSKAEFVIYKLKKMDK) and 404–439 (KDINPIGFQFDKLDRTNSGRITLLDLLESSTKDLPT). The Ca(2+) site is built by aspartate 378, aspartate 380, asparagine 382, cysteine 384, glutamate 389, aspartate 417, serine 421, arginine 423, and aspartate 428.

This sequence belongs to the two pore domain potassium channel (TC 1.A.1.7) family. As to quaternary structure, homodimer. As to expression, expressed in roots, stems, leaves and flowers.

It is found in the vacuole membrane. In terms of biological role, probable voltage-independent potassium-selective tonoplast ion channel. The sequence is that of Two-pore potassium channel 2 (TPK2) from Arabidopsis thaliana (Mouse-ear cress).